A 314-amino-acid polypeptide reads, in one-letter code: Pyridoxal 5'-phosphate synthase-like subunit PDX1.2 (314 aa).

Alanine 2 bears the N-acetylalanine mark.

The protein belongs to the PdxS/SNZ family. As to quaternary structure, homodimer or heterodimer with PDX1.1 or PDX1.3. No interaction with PDX2. In terms of tissue distribution, expressed in callus tissues, flowers and roots. Weakly expressed in leaves and stems.

The protein localises to the cytoplasm. In terms of biological role, the protein has no function in the formation of pyridoxal 5'-phosphate. In Arabidopsis thaliana (Mouse-ear cress), this protein is Pyridoxal 5'-phosphate synthase-like subunit PDX1.2 (PDX12).